A 901-amino-acid chain; its full sequence is Probable inorganic carbon transporter subunit DabA (901 aa).

Positions 424, 426, 606, and 621 each coordinate Zn(2+).

It belongs to the inorganic carbon transporter (TC 9.A.2) DabA family. As to quaternary structure, forms a complex with DabB. The cofactor is Zn(2+).

It localises to the cell membrane. In terms of biological role, part of an energy-coupled inorganic carbon pump. The sequence is that of Probable inorganic carbon transporter subunit DabA from Staphylococcus aureus (strain NCTC 8325 / PS 47).